We begin with the raw amino-acid sequence, 95 residues long: Small ribosomal subunit protein bS6 (95 aa).

This sequence belongs to the bacterial ribosomal protein bS6 family.

Binds together with bS18 to 16S ribosomal RNA. The chain is Small ribosomal subunit protein bS6 from Bacillus pumilus (strain SAFR-032).